The chain runs to 822 residues: Tubulin polyglutamylase TTLL6 (822 aa).

Residues 1–24 (MLQCLTSESEEGAEEREESSTEDL) are disordered. The span at 8–24 (ESEEGAEEREESSTEDL) shows a compositional bias: acidic residues. Residues 57–400 (KKRLVINLSN…GNCDKKKVLE (344 aa)) form the TTL domain. ATP-binding positions include Lys174, 180–181 (QG), 202–205 (QLYI), and 215–217 (KFD). Residue Gln180 participates in a protein binding. Position 241 (Arg241) interacts with L-glutamate. 263-264 (TN) contributes to the ATP binding site. Tyr265, Ser266, and Lys283 together coordinate L-glutamate. 3 residues coordinate Mg(2+): Asp346, Glu359, and Asn361. An a protein-binding site is contributed by His362. Residues 371 to 450 (KLDKEVKDSL…CGGFRLIYPG (80 aa)) are c-MTBD region. Lys377 is a binding site for L-glutamate. 2 disordered regions span residues 736–772 (PLFP…SVFV) and 791–822 (TQAR…TATA). Residues 802–814 (SHSGTTTRDSSTQ) are compositionally biased toward polar residues.

Belongs to the tubulin--tyrosine ligase family. As to quaternary structure, found in a complex with CEP41. Requires Mg(2+) as cofactor. In terms of tissue distribution, highly expressed in testis. Expressed in brain, heart, kidney, liver, lung, muscle and trachea. In the brain, specifically expressed in ependymal cilia.

Its subcellular location is the cytoplasm. The protein resides in the cytoskeleton. It localises to the cilium axoneme. It is found in the cilium basal body. It carries out the reaction L-glutamyl-[protein] + L-glutamate + ATP = gamma-L-glutamyl-L-glutamyl-[protein] + ADP + phosphate + H(+). It catalyses the reaction (L-glutamyl)(n)-gamma-L-glutamyl-L-glutamyl-[protein] + L-glutamate + ATP = (L-glutamyl)(n+1)-gamma-L-glutamyl-L-glutamyl-[protein] + ADP + phosphate + H(+). In terms of biological role, polyglutamylase which modifies both tubulin and non-tubulin proteins, generating alpha-linked polyglutamate side chains on the gamma-carboxyl group of specific glutamate residues of target proteins. Preferentially mediates ATP-dependent long polyglutamate chain elongation over the initiation step of the polyglutamylation reaction. Preferentially modifies the alpha-tubulin tail over a beta-tail. Promotes tubulin polyglutamylation which stimulates spastin/SPAST-mediated microtubule severing, thereby regulating microtubule functions. Mediates microtubule polyglutamylation in primary cilia axoneme which is important for ciliary structural formation and motility. Mediates microtubule polyglutamylation in motile cilia, necessary for the regulation of ciliary coordinated beating. Polyglutamylates non-tubulin protein nucleotidyltransferase CGAS, leading to CGAS DNA-binding inhibition, thereby preventing antiviral defense response. This is Tubulin polyglutamylase TTLL6 from Mus musculus (Mouse).